The primary structure comprises 528 residues: Inositol-3-phosphate synthase (528 aa).

22 residues coordinate NAD(+): Gly66, Gly67, Asn68, Asn69, Asp140, Gln187, Arg190, Thr228, Ala229, Asn230, Thr231, Gly279, Asp304, Ser307, Asn338, Asn339, Asp340, Lys353, Gly392, Asp393, Asp421, and Ser422.

Belongs to the myo-inositol 1-phosphate synthase family. The cofactor is NAD(+).

It is found in the cytoplasm. It localises to the cytosol. The enzyme catalyses D-glucose 6-phosphate = 1D-myo-inositol 3-phosphate. The protein operates within polyol metabolism; myo-inositol biosynthesis; myo-inositol from D-glucose 6-phosphate: step 1/2. Its activity is regulated as follows. Activated by ammonium ions. Functionally, key enzyme in myo-inositol biosynthesis pathway that catalyzes the conversion of glucose 6-phosphate to 1-myo-inositol 1-phosphate in a NAD-dependent manner. Rate-limiting enzyme in the synthesis of all inositol-containing compounds. De novo-synthesized myo-inositol is essential for incorporation into GPI (glycosylphosphatidylinositol) glycolipids in the bloodstream form. In Trypanosoma brucei brucei, this protein is Inositol-3-phosphate synthase.